The following is a 555-amino-acid chain: Dihydroxy-acid dehydratase (555 aa).

Mg(2+) is bound at residue D78. C119 lines the [2Fe-2S] cluster pocket. The Mg(2+) site is built by D120 and K121. Residue K121 is modified to N6-carboxylysine. Residue C191 participates in [2Fe-2S] cluster binding. E444 serves as a coordination point for Mg(2+). S470 serves as the catalytic Proton acceptor.

Belongs to the IlvD/Edd family. Homodimer. It depends on [2Fe-2S] cluster as a cofactor. The cofactor is Mg(2+).

It carries out the reaction (2R)-2,3-dihydroxy-3-methylbutanoate = 3-methyl-2-oxobutanoate + H2O. It catalyses the reaction (2R,3R)-2,3-dihydroxy-3-methylpentanoate = (S)-3-methyl-2-oxopentanoate + H2O. The protein operates within amino-acid biosynthesis; L-isoleucine biosynthesis; L-isoleucine from 2-oxobutanoate: step 3/4. It participates in amino-acid biosynthesis; L-valine biosynthesis; L-valine from pyruvate: step 3/4. Its function is as follows. Functions in the biosynthesis of branched-chain amino acids. Catalyzes the dehydration of (2R,3R)-2,3-dihydroxy-3-methylpentanoate (2,3-dihydroxy-3-methylvalerate) into 2-oxo-3-methylpentanoate (2-oxo-3-methylvalerate) and of (2R)-2,3-dihydroxy-3-methylbutanoate (2,3-dihydroxyisovalerate) into 2-oxo-3-methylbutanoate (2-oxoisovalerate), the penultimate precursor to L-isoleucine and L-valine, respectively. The chain is Dihydroxy-acid dehydratase from Oleidesulfovibrio alaskensis (strain ATCC BAA-1058 / DSM 17464 / G20) (Desulfovibrio alaskensis).